The sequence spans 446 residues: MKPVLALVGRPNVGKSTLFNRLTKSRDAIVADFAGLTRDRHYGDGRLGEREFIVVDTGGFEPTAESGIYKEMAKQTRQAVAESDVVIFVVDVRAGVTGQDHDIARYLRTAGKKVLLAANKAEGMLEGIQLAEFYELGMGEPLAVSSAHGQGIRSLLTAALEDFAFDEPDDLALDDPERPIRLAVAGRPNVGKSTLINTWLGEERLVAFDLPGTTRDAISVPFERNGQKFELIDTAGLRRKGKVFESIEKFSVVKTLQAIADANVVLLLLDATQGVTDQDAHIAGYILDSGRAVVLAVNKWDAVDSYQRELLQRSIEQRLAFLKFAPVLHISAIKRQGLGPVWKAIADAWASATKKLATPVLTRVLLEAVQFQQPKRAGAFRPKLRYAHQGGQNPPVIVIHGNSLEHVTDAYKRFLEGRFRCHFQLSGTPMRIEMKSSRNPFAEKDS.

2 EngA-type G domains span residues 3–167 and 180–353; these read PVLA…AFDE and IRLA…ASAT. GTP-binding positions include 9-16, 56-60, 119-122, 186-193, 233-237, and 298-301; these read GRPNVGKS, DTGGF, NKAE, DTAGL, and NKWD. In terms of domain architecture, KH-like spans 354–438; the sequence is KKLATPVLTR…PMRIEMKSSR (85 aa).

This sequence belongs to the TRAFAC class TrmE-Era-EngA-EngB-Septin-like GTPase superfamily. EngA (Der) GTPase family. Associates with the 50S ribosomal subunit.

Functionally, GTPase that plays an essential role in the late steps of ribosome biogenesis. This Methylibium petroleiphilum (strain ATCC BAA-1232 / LMG 22953 / PM1) protein is GTPase Der.